Reading from the N-terminus, the 265-residue chain is Hemin import ATP-binding protein HmuV (265 aa).

The 237-residue stretch at 13–249 (LKASNLHLQL…TAVENVYGWP (237 aa)) folds into the ABC transporter domain. 45–52 (GPNGAGKS) provides a ligand contact to ATP.

It belongs to the ABC transporter superfamily. Heme (hemin) importer (TC 3.A.1.14.5) family. The complex is composed of two ATP-binding proteins (HmuV), two transmembrane proteins (HmuU) and a solute-binding protein (HmuT).

Its subcellular location is the cell inner membrane. In terms of biological role, part of the ABC transporter complex HmuTUV involved in hemin import. Responsible for energy coupling to the transport system. The sequence is that of Hemin import ATP-binding protein HmuV from Photobacterium damsela subsp. piscicida (Pasteurella piscicida).